A 306-amino-acid polypeptide reads, in one-letter code: Palmitoyl-protein thioesterase 1 (306 aa).

A signal peptide spans 1–27 (MASPGCLWLLAVALLPWTCASRALQHL). Residue C6 is the site of S-palmitoyl cysteine; by ZDHHC3 and ZDHHC7 attachment. Disulfide bonds link C45-C46, C96-C128, and C152-C160. Residue S115 is part of the active site. N-linked (GlcNAc...) asparagine glycans are attached at residues N197, N212, and N232. Active-site residues include D233 and H289.

It belongs to the palmitoyl-protein thioesterase family. In terms of assembly, interacts with CLN5. Interacts with ATP5F1A and ATP5F1B. Post-translationally, glycosylated.

Its subcellular location is the lysosome. The protein resides in the secreted. The protein localises to the golgi apparatus. It localises to the endoplasmic reticulum. It carries out the reaction S-hexadecanoyl-L-cysteinyl-[protein] + H2O = L-cysteinyl-[protein] + hexadecanoate + H(+). The enzyme catalyses hexadecanoyl-CoA + H2O = hexadecanoate + CoA + H(+). It catalyses the reaction S-hexadecanoyl-N-acetylcysteamine + H2O = N-acetylcysteamine + hexadecanoate + H(+). The catalysed reaction is S-hexadecanoyl-N-acetylcysteine methyl ester + H2O = N-acetylcysteine methyl ester + hexadecanoate + H(+). With respect to regulation, palmitoylation reduces PPT1 enzymatic activity. Has thioesterase activity against fatty acid thioesters with 14 -18 carbons, including palmitoyl-CoA, S-palmitoyl-N-acetylcysteamine, and palmitoylated proteins. In contrast to PPT2, PPT1 can hydrolyze palmitoylated proteins and palmitoylcysteine. The polypeptide is Palmitoyl-protein thioesterase 1 (PPT1) (Homo sapiens (Human)).